Here is a 187-residue protein sequence, read N- to C-terminus: Large ribosomal subunit protein uL5 (187 aa).

The protein belongs to the universal ribosomal protein uL5 family. In terms of assembly, part of the 50S ribosomal subunit; part of the 5S rRNA/L5/L18/L25 subcomplex. Contacts the 5S rRNA and the P site tRNA. Forms a bridge to the 30S subunit in the 70S ribosome.

Functionally, this is one of the proteins that bind and probably mediate the attachment of the 5S RNA into the large ribosomal subunit, where it forms part of the central protuberance. In the 70S ribosome it contacts protein S13 of the 30S subunit (bridge B1b), connecting the 2 subunits; this bridge is implicated in subunit movement. Contacts the P site tRNA; the 5S rRNA and some of its associated proteins might help stabilize positioning of ribosome-bound tRNAs. This chain is Large ribosomal subunit protein uL5, found in Nocardia farcinica (strain IFM 10152).